The following is a 148-amino-acid chain: Deoxyuridine 5'-triphosphate nucleotidohydrolase (148 aa).

Residues 67–69 (RSG), asparagine 80, 84–86 (LID), and methionine 94 each bind substrate.

Belongs to the dUTPase family. Requires Mg(2+) as cofactor.

It carries out the reaction dUTP + H2O = dUMP + diphosphate + H(+). Its pathway is pyrimidine metabolism; dUMP biosynthesis; dUMP from dCTP (dUTP route): step 2/2. In terms of biological role, this enzyme is involved in nucleotide metabolism: it produces dUMP, the immediate precursor of thymidine nucleotides and it decreases the intracellular concentration of dUTP so that uracil cannot be incorporated into DNA. This is Deoxyuridine 5'-triphosphate nucleotidohydrolase from Burkholderia ambifaria (strain MC40-6).